The primary structure comprises 27 residues: Dermaseptin-S4 (27 aa).

The protein belongs to the frog skin active peptide (FSAP) family. Dermaseptin subfamily. In terms of assembly, monomer and oligomer. Forms aggregates in aqueous environments. As to expression, expressed by the skin glands.

The protein resides in the secreted. In terms of biological role, potent antimicrobial peptide with activity against bacteria and protozoa. Also has activity against fungi. Also shows activity against enveloped herpes simplex virus type 1. Probably acts by disturbing membrane functions with its amphipathic structure. Binds to healthy erythrocytes (this binding is receptor independent), and has strong hemolytic activity. Does not bind to P.falciparum infected erythrocytes, but accumulates within the parasite. Kills the parasite, and only at high concentrations has a hemolytic activity on the host cell. In vitro, shows high spermicidal activities. This Phyllomedusa sauvagei (Sauvage's leaf frog) protein is Dermaseptin-S4.